We begin with the raw amino-acid sequence, 715 residues long: Methionine--tRNA ligase (715 aa).

A 'HIGH' region motif is present at residues 17–27 (PYANGPIHLGH). 4 residues coordinate Zn(2+): cysteine 148, cysteine 151, cysteine 161, and cysteine 164. The 'KMSKS' region motif lies at 359 to 363 (KMSKS). Lysine 362 contacts ATP. In terms of domain architecture, tRNA-binding spans 614-715 (DLSKVELRVG…KDAKPGDRLK (102 aa)).

This sequence belongs to the class-I aminoacyl-tRNA synthetase family. MetG type 1 subfamily. As to quaternary structure, homodimer. It depends on Zn(2+) as a cofactor.

It is found in the cytoplasm. It carries out the reaction tRNA(Met) + L-methionine + ATP = L-methionyl-tRNA(Met) + AMP + diphosphate. Functionally, is required not only for elongation of protein synthesis but also for the initiation of all mRNA translation through initiator tRNA(fMet) aminoacylation. This Leptospira interrogans serogroup Icterohaemorrhagiae serovar Lai (strain 56601) protein is Methionine--tRNA ligase.